A 234-amino-acid chain; its full sequence is Meiotically up-regulated gene 35 protein (234 aa).

Residues 126 to 156 (DSSGDLTSTDKERDVSPVSHSEKPYWDRYDL) are compositionally biased toward basic and acidic residues. Residues 126–176 (DSSGDLTSTDKERDVSPVSHSEKPYWDRYDLDQPSNQDVEESRNLVQEPKH) form a disordered region. Residues S127 and S128 each carry the phosphoserine modification. At T132 the chain carries Phosphothreonine. A Phosphoserine modification is found at S141.

The protein localises to the cytoplasm. Has a role in meiosis. This is Meiotically up-regulated gene 35 protein (mug35) from Schizosaccharomyces pombe (strain 972 / ATCC 24843) (Fission yeast).